A 342-amino-acid polypeptide reads, in one-letter code: uncharacterized protein (342 aa).

The Nudix hydrolase domain occupies 155–309; sequence TYGIHINGYV…KPNCALVMVD (155 aa).

This is an uncharacterized protein from Saccharomyces cerevisiae (strain ATCC 204508 / S288c) (Baker's yeast).